The chain runs to 370 residues: A-type ATP synthase subunit C (370 aa).

It belongs to the V-ATPase V0D/AC39 subunit family. Has multiple subunits with at least A(3), B(3), C, D, E, F, H, I and proteolipid K(x).

It is found in the cell membrane. Component of the A-type ATP synthase that produces ATP from ADP in the presence of a proton gradient across the membrane. The sequence is that of A-type ATP synthase subunit C from Pyrococcus abyssi (strain GE5 / Orsay).